The sequence spans 115 residues: Superoxide reductase (115 aa).

The Fe cation site is built by Glu14, His16, His41, His47, Cys102, and His105.

This sequence belongs to the desulfoferrodoxin family. In terms of assembly, homotetramer. Fe cation is required as a cofactor.

It catalyses the reaction reduced [rubredoxin] + superoxide + 2 H(+) = oxidized [rubredoxin] + H2O2. Functionally, uses electrons from reduced NADP, by way of rubredoxin and an oxidoreductase, to catalyze the reduction of superoxide to hydrogen peroxide. The polypeptide is Superoxide reductase (sorA) (Pyrococcus horikoshii (strain ATCC 700860 / DSM 12428 / JCM 9974 / NBRC 100139 / OT-3)).